The primary structure comprises 92 residues: Small ribosomal subunit protein uS19 (92 aa).

This sequence belongs to the universal ribosomal protein uS19 family.

Its function is as follows. Protein S19 forms a complex with S13 that binds strongly to the 16S ribosomal RNA. This Bifidobacterium longum subsp. infantis (strain ATCC 15697 / DSM 20088 / JCM 1222 / NCTC 11817 / S12) protein is Small ribosomal subunit protein uS19.